We begin with the raw amino-acid sequence, 439 residues long: Diaminopimelate decarboxylase (439 aa).

K66 is subject to N6-(pyridoxal phosphate)lysine. Residues G248 and 290-293 each bind pyridoxal 5'-phosphate; that span reads EPGR. Substrate is bound by residues R293, R330, and Y334. C361 serves as the catalytic Proton donor. Positions 362 and 390 each coordinate substrate. Y390 contacts pyridoxal 5'-phosphate.

Belongs to the Orn/Lys/Arg decarboxylase class-II family. LysA subfamily. Homodimer. Requires pyridoxal 5'-phosphate as cofactor.

The enzyme catalyses meso-2,6-diaminopimelate + H(+) = L-lysine + CO2. Its pathway is amino-acid biosynthesis; L-lysine biosynthesis via DAP pathway; L-lysine from DL-2,6-diaminopimelate: step 1/1. Its function is as follows. Specifically catalyzes the decarboxylation of meso-diaminopimelate (meso-DAP) to L-lysine. In Halalkalibacterium halodurans (strain ATCC BAA-125 / DSM 18197 / FERM 7344 / JCM 9153 / C-125) (Bacillus halodurans), this protein is Diaminopimelate decarboxylase.